We begin with the raw amino-acid sequence, 157 residues long: Endoribonuclease YbeY (157 aa).

3 residues coordinate Zn(2+): His114, His118, and His124.

Belongs to the endoribonuclease YbeY family. Requires Zn(2+) as cofactor.

Its subcellular location is the cytoplasm. Functionally, single strand-specific metallo-endoribonuclease involved in late-stage 70S ribosome quality control and in maturation of the 3' terminus of the 16S rRNA. The chain is Endoribonuclease YbeY from Caulobacter vibrioides (strain ATCC 19089 / CIP 103742 / CB 15) (Caulobacter crescentus).